Reading from the N-terminus, the 327-residue chain is Acetaldehyde dehydrogenase 6 (327 aa).

15–18 serves as a coordination point for NAD(+); the sequence is SGNI. The active-site Acyl-thioester intermediate is C133. Residues 164–172 and N297 contribute to the NAD(+) site; that span reads SAGPGTRAN.

This sequence belongs to the acetaldehyde dehydrogenase family.

The enzyme catalyses acetaldehyde + NAD(+) + CoA = acetyl-CoA + NADH + H(+). The polypeptide is Acetaldehyde dehydrogenase 6 (Rhodococcus opacus (strain B4)).